The primary structure comprises 492 residues: 5-taurinomethyluridine-[tRNA] synthase subunit GTPB3, mitochondrial (492 aa).

Residues 1-20 (MWRGLSALVTRPASAPLRLC) constitute a mitochondrion transit peptide. Positions 52, 112, and 152 each coordinate 5,10-methylenetetrahydrofolate. The TrmE-type G domain maps to 249–416 (GANVVVAGPP…LLQALKTELA (168 aa)). Residues 256–263 (GPPNAGKS), 282–286 (GTTRD), 303–306 (DTAG), and 374–377 (NKSD) contribute to the GTP site. A K(+)-binding site is contributed by Asn259. 2 residues coordinate Mg(2+): Ser263 and Thr284. Lys492 provides a ligand contact to 5,10-methylenetetrahydrofolate.

This sequence belongs to the TRAFAC class TrmE-Era-EngA-EngB-Septin-like GTPase superfamily. TrmE GTPase family. As to quaternary structure, homodimer; forms a dimer in the presence of potassium. Interacts with MTO1; forms the GTPBP3-MTO1 complex composed of homodimers of GTPBP3 and MTO1. It depends on K(+) as a cofactor.

It localises to the mitochondrion. The enzyme catalyses GTP + H2O = GDP + phosphate + H(+). In terms of biological role, GTPase component of the GTPBP3-MTO1 complex that catalyzes the 5-taurinomethyluridine (taum(5)U) modification at the 34th wobble position (U34) of mitochondrial tRNAs (mt-tRNAs), which plays a role in mt-tRNA decoding and mitochondrial translation. Taum(5)U formation on mammalian mt-tRNA requires the presence of both GTPBP3-mediated GTPase activity and MTO1 catalytic activity. The polypeptide is 5-taurinomethyluridine-[tRNA] synthase subunit GTPB3, mitochondrial (Rattus norvegicus (Rat)).